The primary structure comprises 244 residues: Cyclin-Q (244 aa).

The protein belongs to the cyclin family. Cyclin-like FAM58 subfamily.

Functionally, may be an activating cyclin for the cyclin-associated kinase CDK10. This chain is Cyclin-Q (ccnq), found in Xenopus laevis (African clawed frog).